Reading from the N-terminus, the 687-residue chain is MLFTSTAVAALSGALLIQPALAAPNGLPSHGGSHHGPKDPFEVLDPQNWVNPDNMTWADFKSPPGTKWNDPSRKGSIRNFNIALVNVDYPDKPFTITMAPGSDVFKNPQPGSPNVTRSQVPAFYRDFLNKPGKLNRGHTLHEYWMEDSNGRFGVDLTTFGVYKMPLKSYQYGIGESMNAGACPIGETCYYEIRDDALGAWRKDIGEEKAKSFELVFILSAGQDESSTWQEFGEIMFQNKEDVTSAFGPPPGNGTGNMTLPNYAKTRYVEWTSWASASAIWPNAGDGSSTQAESSGMGTFAHELSHLLNVGDNYNNPYGKPLRRSYTGPWSMMSRGSFNGPGGPHTRWQVPPLQGGSMGSQHTFHDKIRLGLTTKDSALNISREALANSGLIVARVTARVIAPKPGDLIGIHVAMDKDKSPKCDVNTDPYCDGNGYQNYNVEVIDRMGADSFCPDSGVMLSKTRDKAFSNYQWTIDANPQDIKQVDFHRPDGTPAMISLGDYRQLADALFHAGTRSGSQYEYTDKANNLQFYIIEPHRDEAGVLSYTTAVRYVGGKDPHKRGVKLDKNAKITSSNTKPTDKGVTCSFTLHNTGTYNPAAGKAKHPQDVTAYLKSDVYRLKATVEGRGWRVEVPNALATAEFGKTVTVSVAVGAENSAQDKAKVTLTATSEADPSKFATAECKVNKFRN.

The signal sequence occupies residues 1–22 (MLFTSTAVAALSGALLIQPALA). Asn54, Asn114, Asn252, Asn256, and Asn379 each carry an N-linked (GlcNAc...) asparagine glycan.

This sequence belongs to the peptidase M10B family.

The protein resides in the secreted. This Arthroderma benhamiae (strain ATCC MYA-4681 / CBS 112371) (Trichophyton mentagrophytes) protein is Putative secreted metallopeptidase.